The following is a 545-amino-acid chain: Sphingomyelin phosphodiesterase 5 (545 aa).

Residues 1–35 (MSLRESPFPNGFLEGLHAVGWGLIFPCFWFLDRLI) constitute a mitochondrion transit peptide. Over 36-64 (AVCISTTLERMWRLEQECYLHPLKVVFGS) the chain is Mitochondrial matrix. A helical; Signal-anchor for type II membrane protein transmembrane segment spans residues 65-85 (ILFFILFVISTPFALLGFILW). Residues 86–545 (APLQAIRRPF…LSVSLDSEQN (460 aa)) lie on the Mitochondrial intermembrane side of the membrane. Glutamate 258 contacts Mg(2+). Histidine 529 serves as the catalytic Proton acceptor.

It belongs to the neutral sphingomyelinase family. Mg(2+) serves as cofactor. Requires Mn(2+) as cofactor.

It localises to the mitochondrion inner membrane. Its subcellular location is the endoplasmic reticulum membrane. The enzyme catalyses a sphingomyelin + H2O = phosphocholine + an N-acylsphing-4-enine + H(+). The catalysed reaction is N-(hexadecanoyl)-sphing-4-enine-1-phosphocholine + H2O = N-hexadecanoylsphing-4-enine + phosphocholine + H(+). Its pathway is lipid metabolism; sphingolipid metabolism. Its activity is regulated as follows. Activated by the phospholipids cardiolipin, phosphatidylserine, and phosphatidylethanolamine. Strongest activation with cardiolipin. Its function is as follows. Catalyzes the hydrolysis of membrane sphingomyelin to form phosphorylcholine and ceramide. The polypeptide is Sphingomyelin phosphodiesterase 5 (Danio rerio (Zebrafish)).